The sequence spans 346 residues: N-acetyl-gamma-glutamyl-phosphate reductase (346 aa).

Cysteine 149 is a catalytic residue.

The protein belongs to the NAGSA dehydrogenase family. Type 1 subfamily.

It is found in the cytoplasm. The enzyme catalyses N-acetyl-L-glutamate 5-semialdehyde + phosphate + NADP(+) = N-acetyl-L-glutamyl 5-phosphate + NADPH + H(+). It participates in amino-acid biosynthesis; L-arginine biosynthesis; N(2)-acetyl-L-ornithine from L-glutamate: step 3/4. Its function is as follows. Catalyzes the NADPH-dependent reduction of N-acetyl-5-glutamyl phosphate to yield N-acetyl-L-glutamate 5-semialdehyde. The chain is N-acetyl-gamma-glutamyl-phosphate reductase from Saccharophagus degradans (strain 2-40 / ATCC 43961 / DSM 17024).